A 601-amino-acid polypeptide reads, in one-letter code: Elongation factor 4 (601 aa).

The tr-type G domain occupies 6–188 (QCIRNFSIIA…AVVAKVPPPQ (183 aa)). Residues 18–23 (DHGKST) and 135–138 (NKID) contribute to the GTP site.

This sequence belongs to the TRAFAC class translation factor GTPase superfamily. Classic translation factor GTPase family. LepA subfamily.

The protein localises to the cell membrane. It carries out the reaction GTP + H2O = GDP + phosphate + H(+). Functionally, required for accurate and efficient protein synthesis under certain stress conditions. May act as a fidelity factor of the translation reaction, by catalyzing a one-codon backward translocation of tRNAs on improperly translocated ribosomes. Back-translocation proceeds from a post-translocation (POST) complex to a pre-translocation (PRE) complex, thus giving elongation factor G a second chance to translocate the tRNAs correctly. Binds to ribosomes in a GTP-dependent manner. The sequence is that of Elongation factor 4 from Desulfitobacterium hafniense (strain DSM 10664 / DCB-2).